The sequence spans 357 residues: Arginine kinase Cal b 2.0101 (357 aa).

Residues 9–91 (KLEEGFKKLE…FDPIIEDYHK (83 aa)) enclose the Phosphagen kinase N-terminal domain. 64-68 (GVGVY) is a binding site for L-arginine. The Phosphagen kinase C-terminal domain maps to 119 to 356 (FVISTRVRCG…LELIKIEKEM (238 aa)). ATP is bound by residues 122-126 (STRVR) and His185. The cysteines at positions 201 and 271 are disulfide-linked. Glu225 lines the L-arginine pocket. Arg229 contacts ATP. Cys271 serves as a coordination point for L-arginine. Residues 280 to 284 (RASVH) and 309 to 314 (RGTRGE) each bind ATP. Glu314 serves as a coordination point for L-arginine.

The protein belongs to the ATP:guanido phosphotransferase family. As to expression, expressed in chela muscle (at protein level). Expressed in muscle.

The enzyme catalyses L-arginine + ATP = N(omega)-phospho-L-arginine + ADP + H(+). Its function is as follows. Catalyzes the reversible transfer of high energy ATP gamma-phosphate group to L-arginine. The chain is Arginine kinase Cal b 2.0101 from Callinectes bellicosus (Warrior swimming crab).